The following is a 226-amino-acid chain: Probable chemoreceptor glutamine deamidase CheD (226 aa).

The interval 207–226 (PGGMRVERFDTPSRRDPVGA) is disordered.

It belongs to the CheD family.

The catalysed reaction is L-glutaminyl-[protein] + H2O = L-glutamyl-[protein] + NH4(+). In terms of biological role, probably deamidates glutamine residues to glutamate on methyl-accepting chemotaxis receptors (MCPs), playing an important role in chemotaxis. This chain is Probable chemoreceptor glutamine deamidase CheD, found in Bordetella bronchiseptica (strain ATCC BAA-588 / NCTC 13252 / RB50) (Alcaligenes bronchisepticus).